Here is a 256-residue protein sequence, read N- to C-terminus: Thiazole synthase (256 aa).

Lysine 99 (schiff-base intermediate with DXP) is an active-site residue. 1-deoxy-D-xylulose 5-phosphate-binding positions include glycine 160, 186–187, and 208–209; these read AG and NT.

The protein belongs to the ThiG family. As to quaternary structure, homotetramer. Forms heterodimers with either ThiH or ThiS.

The protein resides in the cytoplasm. It carries out the reaction [ThiS sulfur-carrier protein]-C-terminal-Gly-aminoethanethioate + 2-iminoacetate + 1-deoxy-D-xylulose 5-phosphate = [ThiS sulfur-carrier protein]-C-terminal Gly-Gly + 2-[(2R,5Z)-2-carboxy-4-methylthiazol-5(2H)-ylidene]ethyl phosphate + 2 H2O + H(+). It functions in the pathway cofactor biosynthesis; thiamine diphosphate biosynthesis. Functionally, catalyzes the rearrangement of 1-deoxy-D-xylulose 5-phosphate (DXP) to produce the thiazole phosphate moiety of thiamine. Sulfur is provided by the thiocarboxylate moiety of the carrier protein ThiS. In vitro, sulfur can be provided by H(2)S. The polypeptide is Thiazole synthase (Neorickettsia sennetsu (strain ATCC VR-367 / Miyayama) (Ehrlichia sennetsu)).